The chain runs to 51 residues: Light-harvesting protein B-800/850 beta chain (51 aa).

Residues 2–23 lie on the Cytoplasmic side of the membrane; sequence ADDANKVWPSGLTTAEAEELQK. Residues 24-46 traverse the membrane as a helical segment; it reads GLVDGTRVFGVIAVLAHILAYAY. His40 lines the a bacteriochlorophyll pocket. Residues 47 to 51 lie on the Periplasmic side of the membrane; that stretch reads TPWLH.

Belongs to the antenna complex beta subunit family. In terms of assembly, an alpha/beta heterodimer conjugated to 3 bacteriochlorophyll molecules. The core complex is formed by different alpha and beta chains, binding bacteriochlorophyll molecules, and arranged most probably in tetrameric structures disposed around the reaction center. The non-pigmented gamma chains may constitute additional components.

Its subcellular location is the cell inner membrane. Its function is as follows. Antenna complexes are light-harvesting systems, which transfer the excitation energy to the reaction centers. This is Light-harvesting protein B-800/850 beta chain (pucB) from Rubrivivax gelatinosus (Rhodocyclus gelatinosus).